The following is a 183-amino-acid chain: UPF0134 protein MPN_100 (183 aa).

Belongs to the UPF0134 family.

This Mycoplasma pneumoniae (strain ATCC 29342 / M129 / Subtype 1) (Mycoplasmoides pneumoniae) protein is UPF0134 protein MPN_100.